Reading from the N-terminus, the 418-residue chain is Voltage-gated ClC-type chloride channel ClcB (418 aa).

Topologically, residues 1-4 (MFRR) are cytoplasmic. The chain crosses the membrane as a helical span at residues 5-25 (LLIATVVGILAVFAVAGFRHA). Topologically, residues 26–53 (MLLLEWLFLNNDSGSLVNAATNLSSWRR) are periplasmic. A helical membrane pass occupies residues 54–74 (LLTPALGGLAAGLLLMGWQKF). Residues 75 to 145 (TQQRPHAPTD…QRFTPRQEWK (71 aa)) lie on the Cytoplasmic side of the membrane. A helical transmembrane segment spans residues 146-166 (LWIACGAAAGMAAAYRAPLAG). Residues 167 to 172 (SLFIAE) lie on the Periplasmic side of the membrane. A helical membrane pass occupies residues 173–193 (VLFGTMMLASLGPVIISAIVA). Residues 194-221 (WLVSNLINHSDALLYNVQLSVTVQARDY) are Cytoplasmic-facing. A helical membrane pass occupies residues 222-242 (ALIISTGVLAGLCGPLLLTLM). The Periplasmic segment spans residues 243–257 (NACHRGFVSLKLAPP). A helical membrane pass occupies residues 258–278 (WQLALGGLIVGLLSLFTPAVW). Over 279–290 (GNGYSTVQSFLT) the chain is Cytoplasmic. A helical membrane pass occupies residues 291-311 (APPLLMIIAGIFLCKLCAVLA). Residues 312 to 315 (SSGS) lie on the Periplasmic side of the membrane. Residues 316-336 (GAPGGVFTPTLFIGLAIGMLY) traverse the membrane as a helical segment. The Cytoplasmic portion of the chain corresponds to 337–351 (GRSLGLWFPDGEEIT). Residues 352-372 (LLLGLTGMATLLAATTHAPIM) traverse the membrane as a helical segment. Over 373-379 (STLMICE) the chain is Periplasmic. A helical transmembrane segment spans residues 380–400 (MTGEYQLLPGLLIACVIASVI). Residues 401–418 (SRTLHRDSIYRQHTAQHS) lie on the Cytoplasmic side of the membrane.

The protein belongs to the chloride channel (TC 2.A.49) family. ClcB subfamily.

The protein localises to the cell inner membrane. Probably acts as an electrical shunt for an outwardly-directed proton pump that is linked to amino acid decarboxylation, as part of the extreme acid resistance (XAR) response. This is Voltage-gated ClC-type chloride channel ClcB (clcB) from Shigella flexneri.